A 235-amino-acid polypeptide reads, in one-letter code: Small ribosomal subunit protein uS2 (235 aa).

This sequence belongs to the universal ribosomal protein uS2 family.

This Thermoanaerobacter sp. (strain X514) protein is Small ribosomal subunit protein uS2.